The sequence spans 371 residues: MNKAPHETRVVVGMSGGVDSSVAALLLKEQGYDVIGIFMKNWDDTDENGVCTATEDYEDVVRVCNQIGIPYYAVNFEKQYWDKVFTYFLNEYKAGRTPNPDVMCNKEIKFKAFLEHAMSIGADYIATGHYARVEFRDGEYKMLRGADPNKDQTYFLNQLGQAQLSKVMFPIGHLQKADVRRIAKEAGLATAGKKDSTGICFIGERDFKEFLSHYLPAQPGVMKTLDGEVKGRHDGVMYYTIGQRHGLGIGGSGEPWFVVGKDVRENVLYVAQGFENEYLYSTSLKAVDVNWVSDRKPEAPFRCTAKFRYRQPDVGVTVHPLADGGAEVVFDAPARAVTPGQAVVFYNGEECLGGGTIDEVFRNGEKLWYVG.

Residues 13-20 (GMSGGVDS) and Met39 contribute to the ATP site. Positions 99–101 (NPD) are interaction with target base in tRNA. The active-site Nucleophile is the Cys104. Cys104 and Cys200 form a disulfide bridge. Residue Gly128 coordinates ATP. Residues 150 to 152 (KDQ) are interaction with tRNA. Cys200 serves as the catalytic Cysteine persulfide intermediate. Residues 308–309 (RY) form an interaction with tRNA region.

This sequence belongs to the MnmA/TRMU family.

Its subcellular location is the cytoplasm. It carries out the reaction S-sulfanyl-L-cysteinyl-[protein] + uridine(34) in tRNA + AH2 + ATP = 2-thiouridine(34) in tRNA + L-cysteinyl-[protein] + A + AMP + diphosphate + H(+). In terms of biological role, catalyzes the 2-thiolation of uridine at the wobble position (U34) of tRNA, leading to the formation of s(2)U34. The protein is tRNA-specific 2-thiouridylase MnmA 2 of Geobacillus kaustophilus (strain HTA426).